The following is a 258-amino-acid chain: Phosphoadenosine 5'-phosphosulfate reductase (258 aa).

The active-site Nucleophile; cysteine thiosulfonate intermediate is the Cys-244.

This sequence belongs to the PAPS reductase family. CysH subfamily.

The protein localises to the cytoplasm. The catalysed reaction is [thioredoxin]-disulfide + sulfite + adenosine 3',5'-bisphosphate + 2 H(+) = [thioredoxin]-dithiol + 3'-phosphoadenylyl sulfate. It functions in the pathway sulfur metabolism; hydrogen sulfide biosynthesis; sulfite from sulfate: step 3/3. Functionally, catalyzes the formation of sulfite from phosphoadenosine 5'-phosphosulfate (PAPS) using thioredoxin as an electron donor. In Vibrio atlanticus (strain LGP32) (Vibrio splendidus (strain Mel32)), this protein is Phosphoadenosine 5'-phosphosulfate reductase.